The following is a 204-amino-acid chain: uncharacterized protein (204 aa).

This is an uncharacterized protein from Stylonychia lemnae (Ciliate).